The following is a 1515-amino-acid chain: Adhesion G protein-coupled receptor L1 (1515 aa).

A signal peptide spans 1–24 (MARLAAALWSLCVTTVLVTSATQG). Residues 25–857 (LSRAGLPFGL…EIYQGRINEL (833 aa)) are Extracellular-facing. One can recognise an SUEL-type lectin domain in the interval 40–129 (ACEGYPIELR…KYLEVQYDCV (90 aa)). Cystine bridges form between C41-C71, C50-C128, C83-C115, C96-C102, and C140-C322. E42 is a binding site for alpha-L-rhamnose. N98 carries an N-linked (GlcNAc...) asparagine glycan. 117-120 (GTYK) serves as a coordination point for alpha-L-rhamnose. In terms of domain architecture, Olfactomedin-like spans 139–398 (VCPGTLQKVL…VVRYSLEFGP (260 aa)). Positions 400–468 (DPSAGPATSP…APAPSTRRPP (69 aa)) are disordered. Residues 405-441 (PATSPPLSTTTTARPTPLTSTASPAATTPLRRAPLTT) show a composition bias toward low complexity. Over residues 453–468 (DLPPATAPAPSTRRPP) the composition is skewed to pro residues. 2 cysteine pairs are disulfide-bonded: C480/C515 and C503/C532. N-linked (GlcNAc...) asparagine glycosylation is found at N531, N640, N741, N800, N805, and N826. A GAIN-B domain is found at 669–850 (PARFLAAKQN…AVLMAHREIY (182 aa)). Cystine bridges form between C801-C832 and C820-C834. A GPS region spans residues 801 to 850 (CSFWNYSERSMLGYWSTQGCRLVESNKTHTTCACSHLTNFAVLMAHREIY). A helical transmembrane segment spans residues 858–878 (LLSVITWVGIVISLVCLAICI). Over 879 to 892 (STFCFLRGLQTDRN) the chain is Cytoplasmic. The chain crosses the membrane as a helical span at residues 893-913 (TIHKNLCINLFLAELLFLVGI). At 914–919 (DKTQYE) the chain is on the extracellular side. Residues 920-940 (VACPIFAGLLHYFFLAAFSWL) traverse the membrane as a helical segment. Over 941 to 964 (CLEGVHLYLLLVEVFESEYSRTKY) the chain is Cytoplasmic. A helical membrane pass occupies residues 965 to 985 (YYLGGYCFPALVVGIAAAIDY). Over 986 to 1001 (RSYGTEKACWLRVDNY) the chain is Extracellular. A helical membrane pass occupies residues 1002–1022 (FIWSFIGPVSFVIVVNLVFLM). Residues 1023 to 1049 (VTLHKMIRSSSVLKPDSSRLDNIKSWA) are Cytoplasmic-facing. Residues 1050–1070 (LGAIALLFLLGLTWAFGLLFI) traverse the membrane as a helical segment. Topologically, residues 1071–1074 (NKES) are extracellular. The chain crosses the membrane as a helical span at residues 1075–1095 (VVMAYLFTTFNAFQGVFIFVF). The Cytoplasmic portion of the chain corresponds to 1096–1515 (HCALQKKVHK…DGQMQLVTSL (420 aa)). Residues 1144 to 1184 (TQVPGQGRHIHQVSLGPRGRSALPESQKDPGGQSGPGDPLT) form a disordered region. R1237 carries the omega-N-methylarginine modification. S1263 carries the post-translational modification Phosphoserine. Disordered stretches follow at residues 1291 to 1316 (FNNS…RGRN), 1337 to 1369 (RGAS…PGGA), 1401 to 1470 (ESES…SRPP), and 1492 to 1515 (YLAA…VTSL). Pro residues-rich tracts occupy residues 1345–1356 (GPPPEPPVPPVP) and 1449–1461 (ALPP…PGPP). S1497 and S1514 each carry phosphoserine.

It belongs to the G-protein coupled receptor 2 family. Adhesion G-protein coupled receptor (ADGR) subfamily. In terms of assembly, forms a heterodimer, consisting of a large extracellular region (p120) non-covalently linked to a seven-transmembrane moiety (p85). Interacts with syntaxin and with proteins of the SHANK family via the PDZ domain. Isoform 2 interacts with TENM2. Interacts (via extracellular domain) with FLRT1, FLRT2 and FLRT3 (via extracellular domain). Post-translationally, autoproteolytically cleaved into 2 subunits, an extracellular subunit and a seven-transmembrane subunit. This proteolytic processing takes place early in the biosynthetic pathway, either in the endoplasmic reticulum or in the early compartment of the Golgi apparatus. As to expression, expressed in the brain (at protein level). Brain specific distribution but low levels are also detected in most tissues.

The protein localises to the cell membrane. It is found in the cell projection. Its subcellular location is the axon. The protein resides in the growth cone. It localises to the synapse. The protein localises to the presynaptic cell membrane. It is found in the synaptosome. Functionally, calcium-independent receptor of high affinity for alpha-latrotoxin, an excitatory neurotoxin present in black widow spider venom which triggers massive exocytosis from neurons and neuroendocrine cells. Receptor probably implicated in the regulation of exocytosis. In terms of biological role, receptor for TENM2 that mediates heterophilic synaptic cell-cell contact and postsynaptic specialization. This Rattus norvegicus (Rat) protein is Adhesion G protein-coupled receptor L1.